The following is an 861-amino-acid chain: Nuclear cap-binding protein complex subunit 1 (861 aa).

The short motif at 22-30 (RMPKRQRIP) is the Nuclear localization signal element. An MIF4G domain is found at 36-264 (CKEMMPDIRT…LVRVVLPNVK (229 aa)).

This sequence belongs to the NCBP1 family. As to quaternary structure, component of the nuclear cap-binding complex (CBC), a heterodimer composed of STO1/CBC1 and CBC2 that interacts with capped RNAs. The complex interacts strongly with the importin subunit alpha SRP1. The SRP1-CBC trimer also binds to capped RNAs, but formation of the importin alpha/beta heterodimer upon binding of KAP95 to SRP1 in the cytoplasm causes dissociation of CBC from the RNA. The CBC complex is part of the commitment complex 1 (CC1), binding to the cap of pre-mRNA and interacting with U1 snRNP subunits MUD2 and SNU56. The CBC complex is part of the NRD1 complex, composed of CBC2, NAB1, NRD1, SEN1 and STO1/CBC2. The CBC complex also interacts with NPL3 and eIF4G (TIF4631 and TIF4632).

It localises to the nucleus. It is found in the cytoplasm. The protein localises to the perinuclear region. Component of the CBC complex, which binds co-transcriptionally to the 5'-cap of pre-mRNAs and is involved in maturation, export and degradation of nuclear mRNAs. The CBC complex is required for efficient pre-mRNA splicing through efficient commitment complex and spliceosome formation. Together with NPL3, the CBC complex is required for export of mRNAs out of the nucleus. The CBC complex is also involved in nuclear mRNA degradation, probably by directing the mRNAs to the sites of degradation. Affects replication of the positive-strand RNA virus BMV. This Saccharomyces cerevisiae (strain ATCC 204508 / S288c) (Baker's yeast) protein is Nuclear cap-binding protein complex subunit 1 (STO1).